A 218-amino-acid polypeptide reads, in one-letter code: 3-dehydroquinate dehydratase (218 aa).

Residues 29–31 (EFR) and arginine 56 contribute to the 3-dehydroquinate site. Histidine 116 (proton donor/acceptor) is an active-site residue. Lysine 142 serves as the catalytic Schiff-base intermediate with substrate. The 3-dehydroquinate site is built by arginine 180, serine 200, and glutamine 204.

This sequence belongs to the type-I 3-dehydroquinase family. Homodimer.

It catalyses the reaction 3-dehydroquinate = 3-dehydroshikimate + H2O. The protein operates within metabolic intermediate biosynthesis; chorismate biosynthesis; chorismate from D-erythrose 4-phosphate and phosphoenolpyruvate: step 3/7. In terms of biological role, involved in the third step of the chorismate pathway, which leads to the biosynthesis of aromatic amino acids. Catalyzes the cis-dehydration of 3-dehydroquinate (DHQ) and introduces the first double bond of the aromatic ring to yield 3-dehydroshikimate. This is 3-dehydroquinate dehydratase from Methanococcus maripaludis (strain C7 / ATCC BAA-1331).